Reading from the N-terminus, the 277-residue chain is Nudix hydrolase 10 (277 aa).

One can recognise a Nudix hydrolase domain in the interval 97-235 (WIPEAESTIP…KNDLFKDIHH (139 aa)). The short motif at 142 to 163 (GVVDEGEEIFAAAIREVKEETG) is the Nudix box element. Mg(2+) contacts are provided by glutamate 157 and glutamate 161.

This sequence belongs to the Nudix hydrolase family. Mg(2+) is required as a cofactor. Mn(2+) serves as cofactor. As to expression, expressed in roots, stems and, at lower level, leaves.

The catalysed reaction is ADP-D-ribose + H2O = D-ribose 5-phosphate + AMP + 2 H(+). It catalyses the reaction NAD(+) + H2O = beta-nicotinamide D-ribonucleotide + AMP + 2 H(+). The enzyme catalyses NADH + H2O = reduced beta-nicotinamide D-ribonucleotide + AMP + 2 H(+). May mediate the hydrolysis of some nucleoside diphosphate derivatives. In vitro, uses both ADP-ribose and NADH as substrates; however the relevance of such substrates in vivo is unclear. The polypeptide is Nudix hydrolase 10 (NUDT10) (Arabidopsis thaliana (Mouse-ear cress)).